A 182-amino-acid chain; its full sequence is MSKQLTAQAPVDPIVLGKMGSSYGIRGWLRVFSSTEDAESIFDYQPWFIQKAGQWQQVQLESWKHHNQDMIIKLKGVDDRDAANLLTNCEIVVDSSQLPQLEEGDYYWKDLMGCQVVTTEGYDLGKVIDMMETGSNDVLVIKANLKDAFGIKERLVPFLDGQVIKKVDLTTRSIEVDWDPGF.

The PRC barrel domain occupies 102-182 (EEGDYYWKDL…SIEVDWDPGF (81 aa)).

This sequence belongs to the RimM family. Binds ribosomal protein uS19.

Its subcellular location is the cytoplasm. An accessory protein needed during the final step in the assembly of 30S ribosomal subunit, possibly for assembly of the head region. Essential for efficient processing of 16S rRNA. May be needed both before and after RbfA during the maturation of 16S rRNA. It has affinity for free ribosomal 30S subunits but not for 70S ribosomes. This is Ribosome maturation factor RimM from Escherichia fergusonii (strain ATCC 35469 / DSM 13698 / CCUG 18766 / IAM 14443 / JCM 21226 / LMG 7866 / NBRC 102419 / NCTC 12128 / CDC 0568-73).